The chain runs to 504 residues: O-fucosyltransferase 39 (504 aa).

The helical; Signal-anchor for type II membrane protein transmembrane segment at 11–27 threads the bilayer; sequence WILSMFFFVVLFCNNVS. A glycan (N-linked (GlcNAc...) asparagine) is linked at asparagine 115. Residue 288-290 participates in substrate binding; sequence HLR. Asparagine 359 and asparagine 460 each carry an N-linked (GlcNAc...) asparagine glycan.

Belongs to the glycosyltransferase GT106 family.

Its subcellular location is the membrane. Its pathway is glycan metabolism. This Arabidopsis thaliana (Mouse-ear cress) protein is O-fucosyltransferase 39.